We begin with the raw amino-acid sequence, 299 residues long: ATP phosphoribosyltransferase (299 aa).

Belongs to the ATP phosphoribosyltransferase family. Long subfamily. Equilibrium between an active dimeric form, an inactive hexameric form and higher aggregates. Interconversion between the various forms is largely reversible and is influenced by the natural substrates and inhibitors of the enzyme. The cofactor is Mg(2+).

Its subcellular location is the cytoplasm. It catalyses the reaction 1-(5-phospho-beta-D-ribosyl)-ATP + diphosphate = 5-phospho-alpha-D-ribose 1-diphosphate + ATP. It functions in the pathway amino-acid biosynthesis; L-histidine biosynthesis; L-histidine from 5-phospho-alpha-D-ribose 1-diphosphate: step 1/9. With respect to regulation, feedback inhibited by histidine. Its function is as follows. Catalyzes the condensation of ATP and 5-phosphoribose 1-diphosphate to form N'-(5'-phosphoribosyl)-ATP (PR-ATP). Has a crucial role in the pathway because the rate of histidine biosynthesis seems to be controlled primarily by regulation of HisG enzymatic activity. The sequence is that of ATP phosphoribosyltransferase from Buchnera aphidicola subsp. Baizongia pistaciae (strain Bp).